Reading from the N-terminus, the 199-residue chain is Probable thymidylate kinase (199 aa).

13-20 (GIDGAGKT) provides a ligand contact to ATP.

It belongs to the thymidylate kinase family.

The enzyme catalyses dTMP + ATP = dTDP + ADP. This chain is Probable thymidylate kinase, found in Staphylothermus marinus (strain ATCC 43588 / DSM 3639 / JCM 9404 / F1).